The primary structure comprises 234 residues: Ribonuclease HII (234 aa).

Positions 16–207 (ALVAGVDEAG…VRRMLTPKAI (192 aa)) constitute an RNase H type-2 domain. The a divalent metal cation site is built by Asp-22, Glu-23, and Asp-115.

The protein belongs to the RNase HII family. Mn(2+) serves as cofactor. Mg(2+) is required as a cofactor.

The protein localises to the cytoplasm. The enzyme catalyses Endonucleolytic cleavage to 5'-phosphomonoester.. Its function is as follows. Endonuclease that specifically degrades the RNA of RNA-DNA hybrids. This is Ribonuclease HII from Xylella fastidiosa (strain M23).